Reading from the N-terminus, the 171-residue chain is S-ribosylhomocysteine lyase (171 aa).

Histidine 54, histidine 58, and cysteine 128 together coordinate Fe cation.

Belongs to the LuxS family. As to quaternary structure, homodimer. Requires Fe cation as cofactor.

The enzyme catalyses S-(5-deoxy-D-ribos-5-yl)-L-homocysteine = (S)-4,5-dihydroxypentane-2,3-dione + L-homocysteine. Its function is as follows. Involved in the synthesis of autoinducer 2 (AI-2) which is secreted by bacteria and is used to communicate both the cell density and the metabolic potential of the environment. The regulation of gene expression in response to changes in cell density is called quorum sensing. Catalyzes the transformation of S-ribosylhomocysteine (RHC) to homocysteine (HC) and 4,5-dihydroxy-2,3-pentadione (DPD). In Shigella boydii serotype 4 (strain Sb227), this protein is S-ribosylhomocysteine lyase.